We begin with the raw amino-acid sequence, 428 residues long: MASTVPFSPAKVQMFQATNCHGHAGFGSSFAVPRTGPRPRSVAVRVSSEQEAAATVRAPSGRSIEECEADAVAGRFPAPSCVCQTPKAPDGTPEIRPLDMAKRPRRNRRSPALRAAFQETSISPANLVLPLFIHEGEEDAPIGAMPGCFRLGWQHGLLAEVYKARDVGVNSFVLFPKVPDALKSPTGVEAYNDNGLVPRTIRLLKDKFPDIIVYTDVALDPYSSDGHDGIVRKDGVILNDETVYQLCKQAVSQARAGADVVSPSNMMDGRVGAIRSALDAEGFNDVSIMSYTAKYASSFYGPFREALDSNPRFGDKKTYQMNPANYREALLETAADEAEGADILLVKPGLPYLDIIRLSRDNSALPIAAYQVSGEYSMIKAGGALNMIDEEKVMMESLMCLRRAGADVILTYFARQPPAVLCGMGTAK.

The active-site Schiff-base intermediate with substrate is the K294. 5-aminolevulinate-binding residues include R304 and K316. E332 contacts Mg(2+). The active-site Schiff-base intermediate with substrate is K347. 2 residues coordinate 5-aminolevulinate: S373 and Y412.

It belongs to the ALAD family. Homooctamer. The cofactor is Mg(2+).

Its subcellular location is the plastid. The protein localises to the chloroplast. It carries out the reaction 2 5-aminolevulinate = porphobilinogen + 2 H2O + H(+). Its pathway is porphyrin-containing compound metabolism; protoporphyrin-IX biosynthesis; coproporphyrinogen-III from 5-aminolevulinate: step 1/4. In terms of biological role, catalyzes an early step in the biosynthesis of tetrapyrroles. Binds two molecules of 5-aminolevulinate per subunit, each at a distinct site, and catalyzes their condensation to form porphobilinogen. The polypeptide is Delta-aminolevulinic acid dehydratase, chloroplastic (HEMB) (Hordeum vulgare (Barley)).